Here is a 444-residue protein sequence, read N- to C-terminus: Enolase (444 aa).

2 residues coordinate substrate: His-163 and Glu-172. The active-site Proton donor is Glu-215. Residues Asp-250, Glu-300, and Asp-327 each contribute to the Mg(2+) site. Substrate contacts are provided by Glu-300 and Asp-327. Lys-352 acts as the Proton acceptor in catalysis. Substrate is bound by residues Ser-379–Ser-382 and Lys-403.

Belongs to the enolase family. Homodimer. The cofactor is Mg(2+).

Its subcellular location is the cytoplasm. The enzyme catalyses (2R)-2-phosphoglycerate = phosphoenolpyruvate + H2O. It functions in the pathway carbohydrate degradation; glycolysis; pyruvate from D-glyceraldehyde 3-phosphate: step 4/5. This chain is Enolase (PGH1), found in Mesembryanthemum crystallinum (Common ice plant).